We begin with the raw amino-acid sequence, 201 residues long: Kunitz type trypsin inhibitor 104 (201 aa).

An N-terminal signal peptide occupies residues 1-24 (MSTRSLTIFILAHVWLLMATTSIA). 3 disulfide bridges follow: C63/C110, C161/C173, and C166/C169.

It belongs to the protease inhibitor I3 (leguminous Kunitz-type inhibitor) family. Interacts with CP.

It is found in the secreted. The protein resides in the extracellular space. Its subcellular location is the apoplast. In terms of biological role, protease inhibitor involved in the control of mycorrhiza establishment and arbuscule development during root colonization by arbuscular mycorrhizal (AM) fungi (e.g. Rhizophagus irregularis). This chain is Kunitz type trypsin inhibitor 104, found in Medicago truncatula (Barrel medic).